The primary structure comprises 909 residues: Protein NLP1 (909 aa).

Disordered regions lie at residues 51–71, 536–556, 568–605, and 690–745; these read KSLKQTEQSPSASTAMNDNSP, KEDPKELSSGRENSQLDPVPN, ASTPGLRVDIGPSTESASTGGGNMLSSRRPGEKKRAKT, and NSPN…ENTG. Residues 55 to 70 show a composition bias toward polar residues; that stretch reads QTEQSPSASTAMNDNS. Positions 595 to 676 constitute an RWP-RK domain; that stretch reads RRPGEKKRAK…MDSVQGAQGS (82 aa). Over residues 690–716 the composition is skewed to polar residues; sequence NSPNMSSNGPSLKSNEQPSHLNAQTDN. Positions 725–745 are enriched in low complexity; it reads RSPSSSCSKSSGSSNNNENTG. In terms of domain architecture, PB1 spans 811–894; sequence AIKVKATFGE…HTIKISLNEA (84 aa).

It is found in the nucleus. In terms of biological role, probable transcription factor. In Arabidopsis thaliana (Mouse-ear cress), this protein is Protein NLP1 (NLP1).